Here is a 324-residue protein sequence, read N- to C-terminus: MIRNNWTLEEALELFRMPFSDLILKAHSVHVQNFRNNEVQVAALMNIKTGSCPENCRYCAQSAHYNTGLEKKSLSTVEEVKTAAKRAKEIGADRFCFAAAWRNLHDRDLEKICQFVEAIKSEGLESCASLGMLKLDQAQKLKESGLDFYNHNVDTSREFYHNVVTTRTYEERLETVRNVQQAGIKVCCGGILGMGESTEDRASMLVTLANLEQHPLSVPINRLVPIEGTPMEGNPKIDNIDFVRTIAVARIMMPASYVRLAAGRGEMSEEMQALCMLAGANSIFCGEKLLTTPNARPEDDQRLFSQLGITPSRAACTTSDAQLA.

The Radical SAM core domain maps to 37–264 (NEVQVAALMN…ASYVRLAAGR (228 aa)). Positions 52, 56, and 59 each coordinate [4Fe-4S] cluster. Positions 96, 127, 187, and 259 each coordinate [2Fe-2S] cluster.

This sequence belongs to the radical SAM superfamily. Biotin synthase family. In terms of assembly, homodimer. [4Fe-4S] cluster is required as a cofactor. [2Fe-2S] cluster serves as cofactor.

The enzyme catalyses (4R,5S)-dethiobiotin + (sulfur carrier)-SH + 2 reduced [2Fe-2S]-[ferredoxin] + 2 S-adenosyl-L-methionine = (sulfur carrier)-H + biotin + 2 5'-deoxyadenosine + 2 L-methionine + 2 oxidized [2Fe-2S]-[ferredoxin]. It participates in cofactor biosynthesis; biotin biosynthesis; biotin from 7,8-diaminononanoate: step 2/2. Functionally, catalyzes the conversion of dethiobiotin (DTB) to biotin by the insertion of a sulfur atom into dethiobiotin via a radical-based mechanism. In Anaplasma marginale (strain Florida), this protein is Biotin synthase.